The primary structure comprises 231 residues: Potassium/proton antiporter CemA (231 aa).

Transmembrane regions (helical) follow at residues 9–29, 116–136, and 191–211; these read FIPL…SFLF, IICF…LIIL, and IISG…KYWI.

This sequence belongs to the CemA family.

Its subcellular location is the plastid. It is found in the chloroplast inner membrane. The catalysed reaction is K(+)(in) + H(+)(out) = K(+)(out) + H(+)(in). Its function is as follows. Contributes to K(+)/H(+) antiport activity by supporting proton efflux to control proton extrusion and homeostasis in chloroplasts in a light-dependent manner to modulate photosynthesis. Prevents excessive induction of non-photochemical quenching (NPQ) under continuous-light conditions. Indirectly promotes efficient inorganic carbon uptake into chloroplasts. This is Potassium/proton antiporter CemA from Manihot esculenta (Cassava).